A 475-amino-acid polypeptide reads, in one-letter code: Ribulose bisphosphate carboxylase large chain (475 aa).

Residues 1-2 (MS) constitute a propeptide that is removed on maturation. Residue Pro-3 is modified to N-acetylproline. Lys-14 carries the N6,N6,N6-trimethyllysine modification. Substrate-binding residues include Asn-123 and Thr-173. Lys-175 serves as the catalytic Proton acceptor. Residue Lys-177 coordinates substrate. Mg(2+) is bound by residues Lys-201, Asp-203, and Glu-204. Lys-201 is subject to N6-carboxylysine. Residue His-294 is the Proton acceptor of the active site. Positions 295, 327, and 379 each coordinate substrate.

Belongs to the RuBisCO large chain family. Type I subfamily. In terms of assembly, heterohexadecamer of 8 large chains and 8 small chains; disulfide-linked. The disulfide link is formed within the large subunit homodimers. Mg(2+) serves as cofactor. In terms of processing, the disulfide bond which can form in the large chain dimeric partners within the hexadecamer appears to be associated with oxidative stress and protein turnover.

Its subcellular location is the plastid. The protein resides in the chloroplast. It carries out the reaction 2 (2R)-3-phosphoglycerate + 2 H(+) = D-ribulose 1,5-bisphosphate + CO2 + H2O. The enzyme catalyses D-ribulose 1,5-bisphosphate + O2 = 2-phosphoglycolate + (2R)-3-phosphoglycerate + 2 H(+). In terms of biological role, ruBisCO catalyzes two reactions: the carboxylation of D-ribulose 1,5-bisphosphate, the primary event in carbon dioxide fixation, as well as the oxidative fragmentation of the pentose substrate in the photorespiration process. Both reactions occur simultaneously and in competition at the same active site. The sequence is that of Ribulose bisphosphate carboxylase large chain from Pinus koraiensis (Korean pine).